Here is a 405-residue protein sequence, read N- to C-terminus: Acetylornithine aminotransferase 2 (405 aa).

Pyridoxal 5'-phosphate is bound by residues 105–106 (GT) and F138. R141 is a binding site for N(2)-acetyl-L-ornithine. 224–227 (DEVQ) contributes to the pyridoxal 5'-phosphate binding site. The residue at position 254 (K254) is an N6-(pyridoxal phosphate)lysine. S282 lines the N(2)-acetyl-L-ornithine pocket. T283 provides a ligand contact to pyridoxal 5'-phosphate.

The protein belongs to the class-III pyridoxal-phosphate-dependent aminotransferase family. ArgD subfamily. In terms of assembly, homodimer. The cofactor is pyridoxal 5'-phosphate.

The protein localises to the cytoplasm. The enzyme catalyses N(2)-acetyl-L-ornithine + 2-oxoglutarate = N-acetyl-L-glutamate 5-semialdehyde + L-glutamate. The protein operates within amino-acid biosynthesis; L-arginine biosynthesis; N(2)-acetyl-L-ornithine from L-glutamate: step 4/4. The chain is Acetylornithine aminotransferase 2 from Caulobacter vibrioides (strain ATCC 19089 / CIP 103742 / CB 15) (Caulobacter crescentus).